Reading from the N-terminus, the 284-residue chain is Tropomyosin (284 aa).

The tract at residues 1–47 is disordered; that stretch reads MDAIKKKMQAMKIEKDNAMDRADAAEEKARQQQERVEKLEEELRDTQ. Positions 1–284 form a coiled coil; the sequence is MDAIKKKMQA…DQTFQELSGY (284 aa). Over residues 12 to 38 the composition is skewed to basic and acidic residues; that stretch reads KIEKDNAMDRADAAEEKARQQQERVEK.

Belongs to the tropomyosin family. As to quaternary structure, homodimer.

Tropomyosin, in association with the troponin complex, plays a central role in the calcium dependent regulation of muscle contraction. This chain is Tropomyosin, found in Trichinella pseudospiralis (Parasitic roundworm).